Here is a 929-residue protein sequence, read N- to C-terminus: Valine--tRNA ligase (929 aa).

Positions Pro-59 to His-69 match the 'HIGH' region motif. Residues Lys-557–Ser-561 carry the 'KMSKS' region motif. Residue Lys-560 participates in ATP binding. The stretch at Leu-862–Gly-929 forms a coiled coil.

Belongs to the class-I aminoacyl-tRNA synthetase family. ValS type 1 subfamily. In terms of assembly, monomer.

The protein localises to the cytoplasm. The enzyme catalyses tRNA(Val) + L-valine + ATP = L-valyl-tRNA(Val) + AMP + diphosphate. Its function is as follows. Catalyzes the attachment of valine to tRNA(Val). As ValRS can inadvertently accommodate and process structurally similar amino acids such as threonine, to avoid such errors, it has a 'posttransfer' editing activity that hydrolyzes mischarged Thr-tRNA(Val) in a tRNA-dependent manner. This chain is Valine--tRNA ligase, found in Prochlorococcus marinus (strain MIT 9313).